Reading from the N-terminus, the 360-residue chain is tRNA N6-adenosine threonylcarbamoyltransferase (360 aa).

Fe cation is bound by residues His-115 and His-119. Substrate-binding positions include 137-141 (LVSGG), Asp-170, Gly-183, and Asn-283. Asp-311 lines the Fe cation pocket.

This sequence belongs to the KAE1 / TsaD family. The cofactor is Fe(2+).

The protein localises to the cytoplasm. It carries out the reaction L-threonylcarbamoyladenylate + adenosine(37) in tRNA = N(6)-L-threonylcarbamoyladenosine(37) in tRNA + AMP + H(+). Its function is as follows. Required for the formation of a threonylcarbamoyl group on adenosine at position 37 (t(6)A37) in tRNAs that read codons beginning with adenine. Is involved in the transfer of the threonylcarbamoyl moiety of threonylcarbamoyl-AMP (TC-AMP) to the N6 group of A37, together with TsaE and TsaB. TsaD likely plays a direct catalytic role in this reaction. The chain is tRNA N6-adenosine threonylcarbamoyltransferase from Sinorhizobium medicae (strain WSM419) (Ensifer medicae).